Here is a 327-residue protein sequence, read N- to C-terminus: GMP reductase (327 aa).

The Thioimidate intermediate role is filled by C176. 205-228 (IIADGGIRTHGDIAKSIRFGASMV) contributes to the NADP(+) binding site.

Belongs to the IMPDH/GMPR family. GuaC type 2 subfamily.

It catalyses the reaction IMP + NH4(+) + NADP(+) = GMP + NADPH + 2 H(+). Catalyzes the irreversible NADPH-dependent deamination of GMP to IMP. It functions in the conversion of nucleobase, nucleoside and nucleotide derivatives of G to A nucleotides, and in maintaining the intracellular balance of A and G nucleotides. This chain is GMP reductase, found in Streptococcus pyogenes serotype M3 (strain ATCC BAA-595 / MGAS315).